The chain runs to 1640 residues: Clathrin heavy chain 2 (1640 aa).

Alanine 2 carries the post-translational modification N-acetylalanine. The globular terminal domain stretch occupies residues 2 to 479 (AQILPVRFQE…TDPMLALSVY (478 aa)). WD40-like repeat stretches follow at residues 24-67 (NIGF…RPIS), 68-107 (AESA…MAEE), 108-149 (VIFW…TSLV), 150-195 (GCQV…QPIE), 196-257 (GHAA…PEAQ), 258-301 (NDFP…ISAD), and 302-330 (TIFV…VCVE). Serine 67 carries the phosphoserine modification. Tyrosine 184 is subject to Phosphotyrosine. Residue threonine 394 is modified to Phosphothreonine. Residues 449–465 (EKWLKEDKLECSEELGD) are binding site for the uncoating ATPase, involved in lattice disassembly. The segment at 480–523 (LRANVPSKVIQCFAETGQFQKIVLYAKKVGYTPDWIFLLRGVMK) is flexible linker. Residues 524–634 (ISPEQGLQFS…QALEHYTDLY (111 aa)) are distal segment. The heavy chain arm stretch occupies residues 524–1640 (ISPEQGLQFS…PLVFDFDGHE (1117 aa)). CHCR repeat units lie at residues 537–683 (VQDE…QLCV), 686–828 (ASKY…SEEV), 833–972 (IMAV…QLID), 979–1124 (LSET…VKEA), 1128–1269 (YIRG…FRFA), 1274–1420 (LHIV…LLIN), and 1423–1566 (LLVL…RECF). Residue tyrosine 634 is modified to Phosphotyrosine. The segment at 639–1640 (AVVHTHLLNP…PLVFDFDGHE (1002 aa)) is proximal segment. An N6-succinyllysine modification is found at lysine 737. Lysine 856 is modified (N6-acetyllysine). At tyrosine 899 the chain carries Phosphotyrosine. Phosphoserine is present on serine 1167. Tyrosine 1206 bears the Phosphotyrosine mark. Residues 1213–1522 (AAKLLYSNVS…YLYKGNNWWA (310 aa)) form an involved in binding clathrin light chain region. Serine 1229 bears the Phosphoserine mark. Lysine 1441 carries the post-translational modification N6-acetyllysine; alternate. At lysine 1441 the chain carries N6-succinyllysine; alternate. A phosphotyrosine mark is found at tyrosine 1477 and tyrosine 1487. At serine 1494 the chain carries Phosphoserine. Lysine 1501 carries the post-translational modification N6-acetyllysine. A trimerization region spans residues 1551-1640 (QKLLQWFLEE…PLVFDFDGHE (90 aa)).

Belongs to the clathrin heavy chain family. Clathrin triskelions, composed of 3 heavy chains and 3 light chains, are the basic subunits of the clathrin coat. In the presence of light chains, hub assembly is influenced by both the pH and the concentration of calcium. May interact with OCRL. Interacts with AFTPH/aftiphilin. In terms of tissue distribution, maximal levels in skeletal muscle. High levels in heart and testis. Low expression detected in all other tissues.

Its subcellular location is the cytoplasmic vesicle membrane. It localises to the membrane. It is found in the coated pit. Clathrin is the major protein of the polyhedral coat of coated pits and vesicles. Two different adapter protein complexes link the clathrin lattice either to the plasma membrane or to the trans-Golgi network. The sequence is that of Clathrin heavy chain 2 (CLTCL1) from Homo sapiens (Human).